The chain runs to 474 residues: PTS system MurNAc-GlcNAc-specific EIIBC component (474 aa).

The PTS EIIB type-1 domain maps to 5–87 (ERLAKDITHA…ADQSGATLAE (83 aa)). The active-site Phosphocysteine intermediate; for EIIB activity is Cys-27. The region spanning 124–474 (KSIANIFIPL…GTTKEMRNPE (351 aa)) is the PTS EIIC type-1 domain. The next 10 membrane-spanning stretches (helical) occupy residues 129 to 149 (IFIP…IAAI), 167 to 187 (IVTV…IFTG), 193 to 213 (VFGA…LTGI), 228 to 248 (LAAG…LSMV), 268 to 288 (ITLL…AGFV), 299 to 319 (IIGV…LPLV), 343 to 363 (LLPI…ALWV), 378 to 398 (ALPV…TLPL), 402 to 422 (FFTA…IGHI), and 444 to 464 (LGYI…TYFF).

Its subcellular location is the cell membrane. It catalyses the reaction N-acetyl-beta-D-muramate-(1-&gt;4)-N-acetyl-D-glucosamine(out) + N(pros)-phospho-L-histidyl-[protein] = 6-phospho-N-acetyl-beta-D-muramate-(1-&gt;4)-N-acetyl-D-glucosamine(in) + L-histidyl-[protein]. The protein operates within cell wall biogenesis; peptidoglycan recycling. In terms of biological role, the phosphoenolpyruvate-dependent sugar phosphotransferase system (sugar PTS), a major carbohydrate active transport system, catalyzes the phosphorylation of incoming sugar substrates concomitantly with their translocation across the cell membrane. This system is involved in the uptake and phosphorylation of MurNAc-GlcNAc, the principle peptidoglycan turnover product of S.aureus, yielding cytoplasmic MurNAc 6P-GlcNAc. This Staphylococcus epidermidis (strain ATCC 35984 / DSM 28319 / BCRC 17069 / CCUG 31568 / BM 3577 / RP62A) protein is PTS system MurNAc-GlcNAc-specific EIIBC component.